Reading from the N-terminus, the 849-residue chain is G-type lectin S-receptor-like serine/threonine-protein kinase At4g11900 (849 aa).

Residues Met-1–Ser-26 form the signal peptide. The Bulb-type lectin domain occupies Thr-27 to Gln-180. The Extracellular portion of the chain corresponds to Thr-27–Ser-466. 4 N-linked (GlcNAc...) asparagine glycosylation sites follow: Asn-111, Asn-148, Asn-172, and Asn-232. The region spanning Pro-311–Gln-348 is the EGF-like domain. 4 disulfide bridges follow: Cys-315–Cys-327, Cys-321–Cys-336, Cys-401–Cys-421, and Cys-405–Cys-411. The region spanning Cys-368–Ala-447 is the PAN domain. Residue Asn-450 is glycosylated (N-linked (GlcNAc...) asparagine). Residues Ile-467 to Tyr-487 traverse the membrane as a helical segment. Residues Cys-488–Arg-849 lie on the Cytoplasmic side of the membrane. Residues Phe-537–Phe-822 enclose the Protein kinase domain. ATP is bound by residues Leu-543–Val-551 and Lys-565. Ser-571 is subject to Phosphoserine. A caM-binding region spans residues Leu-626–Thr-643. Asp-662 acts as the Proton acceptor in catalysis. A phosphoserine mark is found at Ser-666 and Ser-679. Residue Thr-696 is modified to Phosphothreonine. At Ser-837 the chain carries Phosphoserine. Residue Thr-844 is modified to Phosphothreonine.

This sequence belongs to the protein kinase superfamily. Ser/Thr protein kinase family.

The protein localises to the cell membrane. It catalyses the reaction L-seryl-[protein] + ATP = O-phospho-L-seryl-[protein] + ADP + H(+). It carries out the reaction L-threonyl-[protein] + ATP = O-phospho-L-threonyl-[protein] + ADP + H(+). In Arabidopsis thaliana (Mouse-ear cress), this protein is G-type lectin S-receptor-like serine/threonine-protein kinase At4g11900.